Reading from the N-terminus, the 358-residue chain is Peptide chain release factor 1 (358 aa).

Gln-233 bears the N5-methylglutamine mark.

It belongs to the prokaryotic/mitochondrial release factor family. Post-translationally, methylated by PrmC. Methylation increases the termination efficiency of RF1.

It localises to the cytoplasm. Functionally, peptide chain release factor 1 directs the termination of translation in response to the peptide chain termination codons UAG and UAA. This chain is Peptide chain release factor 1, found in Geobacillus sp. (strain WCH70).